We begin with the raw amino-acid sequence, 621 residues long: Nitrate reductase [NADH] 1 (621 aa).

One can recognise a Cytochrome b5 heme-binding domain in the interval 249 to 324; sequence GKEFTMSEVR…LDTYRIGELI (76 aa). Positions 284 and 307 each coordinate heme. Residues 361 to 473 form the FAD-binding FR-type domain; that stretch reads REKIHCRLVG…KGPLGHVEYT (113 aa). FAD is bound by residues 413–416, 430–432, Phe-435, 447–449, Ser-497, and Thr-500; these read RAYT, LVK, and LMT.

The protein belongs to the nitrate reductase family. In terms of assembly, homodimer. FAD serves as cofactor. Heme is required as a cofactor. It depends on Mo-molybdopterin as a cofactor.

It carries out the reaction nitrite + NAD(+) + H2O = nitrate + NADH + H(+). Functionally, nitrate reductase is a key enzyme involved in the first step of nitrate assimilation in plants, fungi and bacteria. This chain is Nitrate reductase [NADH] 1, found in Zea mays (Maize).